The following is a 225-amino-acid chain: U2 small nuclear ribonucleoprotein B'' (225 aa).

Residues 7-86 (HTIYINNMND…KPMRIQYAKT (80 aa)) form the RRM 1 domain. Positions 100–144 (DKEKKKEKKKAKTMEQAAAAANKKPGQGTPNAANTQGTAAPNPQV) are disordered. The residue at position 111 (lysine 111) is an N6-acetyllysine; alternate. Residue lysine 111 forms a Glycyl lysine isopeptide (Lys-Gly) (interchain with G-Cter in SUMO2); alternate linkage. Positions 113–123 (MEQAAAAANKK) are enriched in low complexity. Residues 127-140 (GTPNAANTQGTAAP) show a composition bias toward polar residues. Tyrosine 151 bears the Phosphotyrosine mark. The region spanning 151–225 (YILFLNNLPE…HAMKITYAKK (75 aa)) is the RRM 2 domain.

Belongs to the RRM U1 A/B'' family. Identified in the spliceosome B complex. Identified in the spliceosome C complex. Present in a spliceosome complex assembled in vitro, and composed of SNRPB2, HPRP8BP and CRNKL1. Contributes to the binding of stem loop IV of U2 snRNA with SNRPP1.

The protein resides in the nucleus. Functionally, involved in pre-mRNA splicing as component of the spliceosome. Associated with sn-RNP U2, where it contributes to the binding of stem loop IV of U2 snRNA. This chain is U2 small nuclear ribonucleoprotein B'' (Snrpb2), found in Mus musculus (Mouse).